We begin with the raw amino-acid sequence, 950 residues long: ABC transporter A family member 9 (950 aa).

6 consecutive transmembrane segments (helical) span residues 31–51 (ATCL…SIEE), 223–243 (IISA…MFGF), 276–296 (WLIW…LFGM), 308–328 (FVLV…LAFA), 342–362 (VGFL…AGFP), and 426–446 (IWLV…DNII). An ABC transporter domain is found at 520-765 (VQIHGLAKTY…FGTGFVATVS (246 aa)). ATP is bound at residue 566 to 573 (GPNGAGKT).

Belongs to the ABC transporter superfamily. ABCA family. CPR flippase (TC 3.A.1.211) subfamily. In terms of tissue distribution, highly expressed in siliques. Detected in seedlings, rosette leaves, stems and flowers.

It localises to the endoplasmic reticulum membrane. Its function is as follows. Mediates the transport of acyl-CoAs and/or free fatty acids to the endoplasmic reticulum. Has no effect on the selectivity of fatty acid incorporation into triacylglycerol or further desaturation steps. The chain is ABC transporter A family member 9 (ABCA9) from Arabidopsis thaliana (Mouse-ear cress).